The primary structure comprises 364 residues: DNA polymerase IV (364 aa).

The UmuC domain maps to 14–198 (IIHIDMDAFF…LPIEKFHGVG (185 aa)). Residues aspartate 18 and aspartate 116 each coordinate Mg(2+). The active site involves glutamate 117.

It belongs to the DNA polymerase type-Y family. Monomer. Mg(2+) serves as cofactor.

It is found in the cytoplasm. The catalysed reaction is DNA(n) + a 2'-deoxyribonucleoside 5'-triphosphate = DNA(n+1) + diphosphate. Functionally, poorly processive, error-prone DNA polymerase involved in untargeted mutagenesis. Copies undamaged DNA at stalled replication forks, which arise in vivo from mismatched or misaligned primer ends. These misaligned primers can be extended by PolIV. Exhibits no 3'-5' exonuclease (proofreading) activity. May be involved in translesional synthesis, in conjunction with the beta clamp from PolIII. The sequence is that of DNA polymerase IV from Streptococcus pyogenes serotype M28 (strain MGAS6180).